Reading from the N-terminus, the 1026-residue chain is Contactin-4 (1026 aa).

Residues 1–18 (MRLPWELLVLQSFMLCLA) form the signal peptide. Ig-like C2-type domains are found at residues 32–117 (PSHV…AKLQ), 122–206 (ENFK…HQVL), 225–311 (PKIE…GQVT), 316–400 (PNWV…AELS), 406–493 (PDFS…GNVV), and 497–586 (PTKV…DKLS). 6 disulfide bridges follow: cysteine 50–cysteine 100, cysteine 144–cysteine 194, cysteine 247–cysteine 295, cysteine 337–cysteine 384, cysteine 429–cysteine 477, and cysteine 519–cysteine 576. N-linked (GlcNAc...) asparagine glycosylation is found at asparagine 65, asparagine 90, and asparagine 191. N-linked (GlcNAc...) asparagine glycosylation is found at asparagine 370, asparagine 375, and asparagine 466. Fibronectin type-III domains follow at residues 599 to 697 (PPEA…TEEA), 702 to 799 (TPAN…SAEE), 804 to 899 (PPAS…TRKP), and 900 to 995 (PPSQ…ISNS). Residues 685–710 (PSRPSEKRRTEEALPEVTPANVSGGG) form a disordered region. Residues 687-696 (RPSEKRRTEE) are compositionally biased toward basic and acidic residues. 7 N-linked (GlcNAc...) asparagine glycosylation sites follow: asparagine 705, asparagine 764, asparagine 858, asparagine 893, asparagine 911, asparagine 929, and asparagine 954. Serine 1000 is lipidated: GPI-anchor amidated serine. The propeptide at 1001–1026 (GASTSNACTLSAISTIMISLTARSSL) is removed in mature form.

It belongs to the immunoglobulin superfamily. Contactin family. As to quaternary structure, interacts with PTPRG. Specifically expressed in the nervous system. Not expressed in heart, spleen, lung, liver, kidney or skeletal muscle. In the hippocampus, it is highly expressed in CA1 pyramidal cells and weakly expressed in other regions of the hippocampus.

The protein localises to the cell membrane. The protein resides in the secreted. Functionally, contactins mediate cell surface interactions during nervous system development. Has some neurite outgrowth-promoting activity. May be involved in synaptogenesis. This Rattus norvegicus (Rat) protein is Contactin-4 (Cntn4).